Here is a 592-residue protein sequence, read N- to C-terminus: A-type ATP synthase subunit A (592 aa).

233–240 (GPFGSGKT) contributes to the ATP binding site.

Belongs to the ATPase alpha/beta chains family. In terms of assembly, has multiple subunits with at least A(3), B(3), C, D, E, F, H, I and proteolipid K(x).

It localises to the cell membrane. The catalysed reaction is ATP + H2O + 4 H(+)(in) = ADP + phosphate + 5 H(+)(out). Its function is as follows. Component of the A-type ATP synthase that produces ATP from ADP in the presence of a proton gradient across the membrane. The A chain is the catalytic subunit. The polypeptide is A-type ATP synthase subunit A (Saccharolobus solfataricus (strain ATCC 35092 / DSM 1617 / JCM 11322 / P2) (Sulfolobus solfataricus)).